The chain runs to 481 residues: Cis-aconitate decarboxylase (481 aa).

The disordered stretch occupies residues serine 462–serine 481. A compositionally biased stretch (polar residues) spans alanine 467 to serine 481.

It belongs to the PrpD family. In terms of assembly, homodimer. Expressed in LPS-tolerized macrophages (at protein level). Expressed in peripheral blood mononuclear cells (PBMCs), microglia and macrophage cells.

It is found in the mitochondrion. It carries out the reaction cis-aconitate + H(+) = itaconate + CO2. Its function is as follows. Cis-aconitate decarboxylase that catalyzes production of itaconate and is involved in the inhibition of the inflammatory response. Acts as a negative regulator of the Toll-like receptors (TLRs)-mediated inflammatory innate response by stimulating the tumor necrosis factor alpha-induced protein TNFAIP3 expression via reactive oxygen species (ROS) in LPS-tolerized macrophages. Involved in antimicrobial response of innate immune cells; ACOD1-mediated itaconic acid production contributes to the antimicrobial activity of macrophages by generating itaconate, leading to alkylation of proteins, such as TFEB. Involved in antiviral response following infection by flavivirus in neurons: ACOD1-mediated itaconate production inhibits the activity of succinate dehydrogenase, generating a metabolic state in neurons that suppresses replication of viral genomes. Plays a role in the embryo implantation. This is Cis-aconitate decarboxylase from Homo sapiens (Human).